The primary structure comprises 494 residues: UPF0371 protein spr0309 (494 aa).

This sequence belongs to the UPF0371 family.

This Streptococcus pneumoniae (strain ATCC BAA-255 / R6) protein is UPF0371 protein spr0309.